Here is a 427-residue protein sequence, read N- to C-terminus: Septin-8-B (427 aa).

The region spanning 39-305 (QGFCFNILCV…ELYRRCKLEE (267 aa)) is the Septin-type G domain. Positions 49–56 (GETGIGKS) are G1 motif. Residues 49–56 (GETGIGKS), Gly104, 185–193 (KADTISKSE), Gly239, and Arg254 contribute to the GTP site. A G3 motif region spans residues 101–104 (DTVG). The G4 motif stretch occupies residues 184-187 (AKAD). A coiled-coil region spans residues 320–407 (LQETYEAKRK…RRKVAMETLQ (88 aa)). The segment covering 406-418 (LQSQSFQATSQQP) has biased composition (polar residues). A disordered region spans residues 406–427 (LQSQSFQATSQQPLKKDKDRKN).

The protein belongs to the TRAFAC class TrmE-Era-EngA-EngB-Septin-like GTPase superfamily. Septin GTPase family.

This Xenopus laevis (African clawed frog) protein is Septin-8-B (sept8-b).